Consider the following 518-residue polypeptide: MIPDVSQALAWLEKHPQALKGIQRGLERETLRVNADGTLATTGHPEALGSALTHKWITTDFAEALLEFITPVDGDIEHMLTFMRDLHRYTARNMGDERMWPLSMPCYIAEGQDIELAQYGTSNTGRFKTLYREGLKNRYGALMQTISGVHYNFSLPMAFWQAKCGDISGADAKEKISAGYFRVIRNYYRFGWVIPYLFGASPAICSSFLQGKPTSLPFEKTECGMYYLPYATSLRLSDLGYTNKSQSNLGITFNDLYEYVAGLKQAIKTPSEEYAKIGIEKDGKRLQINSNVLQIENELYAPIRPKRVTRSGESPSDALLRGGIEYIEVRSLDINPFSPIGVDEQQVRFLDLFMVWCALADAPEMSSSELACTRVNWNRVILEGRKPGLTLGIGCETAQFPLPQVGKDLFRDLKRVAQTLDSINGGEAYQKVCDELVACFDNPDLTFSARILRSMIDTGIGGTGKAFAEAYRNLLREEPLEILREEDFVAEREASERRQQEMEAADTEPFAVWLEKHA.

This sequence belongs to the glutamate--cysteine ligase type 1 family. Type 1 subfamily.

The catalysed reaction is L-cysteine + L-glutamate + ATP = gamma-L-glutamyl-L-cysteine + ADP + phosphate + H(+). It functions in the pathway sulfur metabolism; glutathione biosynthesis; glutathione from L-cysteine and L-glutamate: step 1/2. The chain is Glutamate--cysteine ligase from Shigella dysenteriae serotype 1 (strain Sd197).